The chain runs to 319 residues: ATP-dependent 6-phosphofructokinase (319 aa).

G11 contacts ATP. 21–25 (RAVVR) lines the ADP pocket. ATP-binding positions include 72–73 (RS) and 102–105 (GDGS). D103 is a Mg(2+) binding site. 125–127 (TID) is a binding site for substrate. The Proton acceptor role is filled by D127. R154 serves as a coordination point for ADP. Residues R162 and 169 to 171 (MGR) contribute to the substrate site. ADP contacts are provided by residues 185-187 (GAE), R211, and 213-215 (KKH). Substrate-binding positions include E222, R243, and 249-252 (HVQR).

The protein belongs to the phosphofructokinase type A (PFKA) family. ATP-dependent PFK group I subfamily. Prokaryotic clade 'B1' sub-subfamily. As to quaternary structure, homotetramer. The cofactor is Mg(2+).

Its subcellular location is the cytoplasm. It catalyses the reaction beta-D-fructose 6-phosphate + ATP = beta-D-fructose 1,6-bisphosphate + ADP + H(+). The protein operates within carbohydrate degradation; glycolysis; D-glyceraldehyde 3-phosphate and glycerone phosphate from D-glucose: step 3/4. Its activity is regulated as follows. Allosterically activated by ADP and other diphosphonucleosides, and allosterically inhibited by phosphoenolpyruvate. Its function is as follows. Catalyzes the phosphorylation of D-fructose 6-phosphate to fructose 1,6-bisphosphate by ATP, the first committing step of glycolysis. The chain is ATP-dependent 6-phosphofructokinase from Natranaerobius thermophilus (strain ATCC BAA-1301 / DSM 18059 / JW/NM-WN-LF).